Reading from the N-terminus, the 342-residue chain is RNA 3'-terminal phosphate cyclase (342 aa).

The protein belongs to the RNA 3'-terminal cyclase family. Type 1 subfamily.

The protein localises to the cytoplasm. It carries out the reaction a 3'-end 3'-phospho-ribonucleotide-RNA + GTP = a 3'-end 2',3'-cyclophospho-ribonucleotide-RNA + GMP + diphosphate. With respect to regulation, inhibited by GMP. In terms of biological role, catalyzes the GTP-dependent conversion of 3'-phosphate to a 2',3'-cyclic phosphodiester at the end of RNA. The biological role of this enzyme is unknown but it is likely to function in some aspects of cellular RNA processing. This Pyrococcus furiosus (strain ATCC 43587 / DSM 3638 / JCM 8422 / Vc1) protein is RNA 3'-terminal phosphate cyclase.